Consider the following 374-residue polypeptide: Pre-B-cell leukemia transcription factor 4 (374 aa).

Residues 14-209 form the PBC domain; that stretch reads PRRLDTSDVL…VMTLRSRLLD (196 aa). Positions 21–100 are PBC-A; the sequence is DVLQQIMAIT…EGVCRPEKRG (80 aa). The segment at 103–209 is PBC-B; sequence GAVARAGTAT…VMTLRSRLLD (107 aa). The segment at residues 210–272 is a DNA-binding region (homeobox; TALE-type); it reads ARRKRRNFSK…NKRIRYKKNM (63 aa). The disordered stretch occupies residues 333–374; that stretch reads QPPPGGGCLQSQAQGSWQGATPQPATASPAGDPGSINSSTSN. Polar residues predominate over residues 341–358; that stretch reads LQSQAQGSWQGATPQPAT.

The protein belongs to the TALE/PBX homeobox family.

The protein resides in the nucleus. This chain is Pre-B-cell leukemia transcription factor 4 (PBX4), found in Homo sapiens (Human).